Here is a 306-residue protein sequence, read N- to C-terminus: D-alanine--D-alanine ligase (306 aa).

Residues 101–303 (KQVWQGIGLT…FSQLVVKILE (203 aa)) enclose the ATP-grasp domain. Residue 134–189 (VADLGLPLIVKPSLEGSSVGMTKVNEISELRGALEAAFRYDVDLLVEKWLHGPEYT) coordinates ATP. 3 residues coordinate Mg(2+): D257, E270, and N272.

The protein belongs to the D-alanine--D-alanine ligase family. Mg(2+) is required as a cofactor. The cofactor is Mn(2+).

It localises to the cytoplasm. The enzyme catalyses 2 D-alanine + ATP = D-alanyl-D-alanine + ADP + phosphate + H(+). The protein operates within cell wall biogenesis; peptidoglycan biosynthesis. Functionally, cell wall formation. This Photorhabdus laumondii subsp. laumondii (strain DSM 15139 / CIP 105565 / TT01) (Photorhabdus luminescens subsp. laumondii) protein is D-alanine--D-alanine ligase.